A 230-amino-acid chain; its full sequence is Thymidylate synthase 1 (230 aa).

92 to 93 lines the dUMP pocket; it reads RR. Residue cysteine 112 is the Nucleophile of the active site. Residues 132-135, asparagine 143, and 173-175 each bind dUMP; these read RSND and HVY. (6R)-5,10-methylene-5,6,7,8-tetrahydrofolate is bound at residue aspartate 135.

It belongs to the thymidylate synthase family. Bacterial-type ThyA subfamily. Homodimer.

It localises to the cytoplasm. It catalyses the reaction dUMP + (6R)-5,10-methylene-5,6,7,8-tetrahydrofolate = 7,8-dihydrofolate + dTMP. It participates in pyrimidine metabolism; dTTP biosynthesis. Its function is as follows. Catalyzes the reductive methylation of 2'-deoxyuridine-5'-monophosphate (dUMP) to 2'-deoxythymidine-5'-monophosphate (dTMP) while utilizing 5,10-methylenetetrahydrofolate (mTHF) as the methyl donor and reductant in the reaction, yielding dihydrofolate (DHF) as a by-product. This enzymatic reaction provides an intracellular de novo source of dTMP, an essential precursor for DNA biosynthesis. This is Thymidylate synthase 1 from Bacillus amyloliquefaciens (Bacillus velezensis).